A 526-amino-acid chain; its full sequence is Alpha-ketoglutaric semialdehyde dehydrogenase (526 aa).

Residues Ser-159–Asn-160, Lys-185–Ser-188, and Gly-240–Ser-241 contribute to the NADP(+) site. Glu-264 functions as the Proton acceptor in the catalytic mechanism. Residue Cys-301 is the Nucleophile of the active site. Residue Glu-393 participates in NADP(+) binding.

The protein belongs to the aldehyde dehydrogenase family.

It catalyses the reaction 2,5-dioxopentanoate + NADP(+) + H2O = 2-oxoglutarate + NADPH + 2 H(+). It participates in carbohydrate acid metabolism; D-glucarate degradation. Functionally, catalyzes the NAD(P)(+)-dependent oxidation of alpha-ketoglutaric semialdehyde (alphaKGSA) to alpha-ketoglutarate in the D-glutarate degradation pathway. This is Alpha-ketoglutaric semialdehyde dehydrogenase from Acinetobacter baylyi (strain ATCC 33305 / BD413 / ADP1).